A 311-amino-acid chain; its full sequence is Pyrimidine-specific ribonucleoside hydrolase RihA (311 aa).

Residue His240 is part of the active site.

This sequence belongs to the IUNH family. RihA subfamily.

Hydrolyzes with equal efficiency cytidine or uridine to ribose and cytosine or uracil, respectively. This Escherichia coli (strain SMS-3-5 / SECEC) protein is Pyrimidine-specific ribonucleoside hydrolase RihA.